The chain runs to 100 residues: Small ribosomal subunit protein uS14c (100 aa).

Belongs to the universal ribosomal protein uS14 family. As to quaternary structure, part of the 30S ribosomal subunit.

It localises to the plastid. The protein localises to the chloroplast. Binds 16S rRNA, required for the assembly of 30S particles. In Gracilaria tenuistipitata var. liui (Red alga), this protein is Small ribosomal subunit protein uS14c.